Consider the following 249-residue polypeptide: MEWLDNAIILELGSFRESDVWVKLLTSQHGVISAFAFGGHRSRRRFCGCLGILNEIQVRVQTSRNGRFLNLQEASLINGPIQLRTNKNRFGAFINCIRFLEVVGVSSDAAPPVYTLMKELFYFFEKNTQPYEIIPILFRLRIASEQGYAPIFSNCAKCGRLINNKGFFGISDGIIVCSICINYIKTPIAIGYESLELLKRVQLASPYDWKLSENTKSAAAQKYECTEIINAFVEYHLGITWSKGRFLKV.

The protein belongs to the RecO family.

In terms of biological role, involved in DNA repair and RecF pathway recombination. The polypeptide is DNA repair protein RecO (Lawsonia intracellularis (strain PHE/MN1-00)).